The sequence spans 179 residues: Probable mitochondrial import inner membrane translocase subunit Tim17 1 (179 aa).

Transmembrane regions (helical) follow at residues 17-37 (CGGAFAMGALGGGAFQAIKGF), 61-81 (LVGGNFAVWGATFSAIDCSLV), and 113-133 (LSSALVGGALLALIEGVGIVV).

It belongs to the Tim17/Tim22/Tim23 family. Component of the TIM23 complex at least composed of Tim23, Tim17 (Tim17a1, Tim17a2 or Tim17b1) and a Tim50. The complex interacts with the Tim44 component of the PAM complex.

The protein localises to the mitochondrion inner membrane. In terms of biological role, essential component of the TIM23 complex, a complex that mediates the translocation of transit peptide-containing proteins across the mitochondrial inner membrane. The sequence is that of Probable mitochondrial import inner membrane translocase subunit Tim17 1 (Tim17b1) from Drosophila melanogaster (Fruit fly).